We begin with the raw amino-acid sequence, 641 residues long: Fructose-1,6-bisphosphatase class 3 (641 aa).

It belongs to the FBPase class 3 family. Mn(2+) serves as cofactor.

The catalysed reaction is beta-D-fructose 1,6-bisphosphate + H2O = beta-D-fructose 6-phosphate + phosphate. Its pathway is carbohydrate biosynthesis; gluconeogenesis. This Ligilactobacillus salivarius (strain UCC118) (Lactobacillus salivarius) protein is Fructose-1,6-bisphosphatase class 3.